The chain runs to 207 residues: Uracil phosphoribosyltransferase (207 aa).

Residues Arg-77, Arg-102, and 129–137 (DPMLATGGS) contribute to the 5-phospho-alpha-D-ribose 1-diphosphate site. Uracil is bound by residues Ile-192 and 197–199 (GDA). Asp-198 serves as a coordination point for 5-phospho-alpha-D-ribose 1-diphosphate.

It belongs to the UPRTase family. The cofactor is Mg(2+).

It catalyses the reaction UMP + diphosphate = 5-phospho-alpha-D-ribose 1-diphosphate + uracil. The protein operates within pyrimidine metabolism; UMP biosynthesis via salvage pathway; UMP from uracil: step 1/1. With respect to regulation, allosterically activated by GTP. Functionally, catalyzes the conversion of uracil and 5-phospho-alpha-D-ribose 1-diphosphate (PRPP) to UMP and diphosphate. This is Uracil phosphoribosyltransferase from Ureaplasma urealyticum serovar 10 (strain ATCC 33699 / Western).